Consider the following 740-residue polypeptide: Phosphoribosylformylglycinamidine synthase subunit PurL (740 aa).

The active site involves His-54. Positions 57 and 96 each coordinate ATP. Glu-98 is a Mg(2+) binding site. Substrate-binding positions include 99–102 (SHNH) and Arg-121. The active-site Proton acceptor is the His-100. Asp-122 contacts Mg(2+). Gln-245 lines the substrate pocket. Asp-273 is a Mg(2+) binding site. 317 to 319 (ESQ) lines the substrate pocket. The ATP site is built by Asp-499 and Gly-536. Asn-537 contributes to the Mg(2+) binding site. Substrate is bound at residue Ser-539.

It belongs to the FGAMS family. Monomer. Part of the FGAM synthase complex composed of 1 PurL, 1 PurQ and 2 PurS subunits.

It is found in the cytoplasm. The catalysed reaction is N(2)-formyl-N(1)-(5-phospho-beta-D-ribosyl)glycinamide + L-glutamine + ATP + H2O = 2-formamido-N(1)-(5-O-phospho-beta-D-ribosyl)acetamidine + L-glutamate + ADP + phosphate + H(+). It functions in the pathway purine metabolism; IMP biosynthesis via de novo pathway; 5-amino-1-(5-phospho-D-ribosyl)imidazole from N(2)-formyl-N(1)-(5-phospho-D-ribosyl)glycinamide: step 1/2. Part of the phosphoribosylformylglycinamidine synthase complex involved in the purines biosynthetic pathway. Catalyzes the ATP-dependent conversion of formylglycinamide ribonucleotide (FGAR) and glutamine to yield formylglycinamidine ribonucleotide (FGAM) and glutamate. The FGAM synthase complex is composed of three subunits. PurQ produces an ammonia molecule by converting glutamine to glutamate. PurL transfers the ammonia molecule to FGAR to form FGAM in an ATP-dependent manner. PurS interacts with PurQ and PurL and is thought to assist in the transfer of the ammonia molecule from PurQ to PurL. This Anoxybacillus flavithermus (strain DSM 21510 / WK1) protein is Phosphoribosylformylglycinamidine synthase subunit PurL.